A 75-amino-acid polypeptide reads, in one-letter code: ATP synthase subunit c (75 aa).

2 consecutive transmembrane segments (helical) span residues 8–28 (FIAI…VANI) and 54–74 (AGMV…LMFV).

This sequence belongs to the ATPase C chain family. In terms of assembly, F-type ATPases have 2 components, F(1) - the catalytic core - and F(0) - the membrane proton channel. F(1) has five subunits: alpha(3), beta(3), gamma(1), delta(1), epsilon(1). F(0) has three main subunits: a(1), b(2) and c(10-14). The alpha and beta chains form an alternating ring which encloses part of the gamma chain. F(1) is attached to F(0) by a central stalk formed by the gamma and epsilon chains, while a peripheral stalk is formed by the delta and b chains.

It localises to the cell membrane. Functionally, f(1)F(0) ATP synthase produces ATP from ADP in the presence of a proton or sodium gradient. F-type ATPases consist of two structural domains, F(1) containing the extramembraneous catalytic core and F(0) containing the membrane proton channel, linked together by a central stalk and a peripheral stalk. During catalysis, ATP synthesis in the catalytic domain of F(1) is coupled via a rotary mechanism of the central stalk subunits to proton translocation. Key component of the F(0) channel; it plays a direct role in translocation across the membrane. A homomeric c-ring of between 10-14 subunits forms the central stalk rotor element with the F(1) delta and epsilon subunits. This chain is ATP synthase subunit c, found in Wolbachia sp. subsp. Brugia malayi (strain TRS).